Here is a 134-residue protein sequence, read N- to C-terminus: MFACRTLCLVVVMVASLGTSGVGGRSVEGVSRMEKLLSSSISPSSTPLGFLSQDHSVNKRQVFDQACKGVYDRNLFKKLNRVCEDCYNLYRKPFIVTTCRENCYSNRVFRQCLDDLLLSDVIDEYVSNVQMVGK.

The signal sequence occupies residues 1-24; sequence MFACRTLCLVVVMVASLGTSGVGG. Residue Gln61 is modified to Pyrrolidone carboxylic acid. Phe63 is modified (D-phenylalanine; in form CHH-B-II). 3 disulfides stabilise this stretch: Cys67/Cys103, Cys83/Cys99, and Cys86/Cys112. At Val132 the chain carries Valine amide.

This sequence belongs to the arthropod CHH/MIH/GIH/VIH hormone family. Post-translationally, stereoinversion of L-Phe (form CHH-B-I) to D-Phe (form CHH-B-II). Produced by the medulla terminalis X-organ in the eyestalks and transported to the sinus gland where they are stored and released. Present also in the ventral nervous system.

The protein localises to the secreted. Its function is as follows. Hormone found in the sinus gland of isopods and decapods which controls the blood sugar level. Has a secretagogue action over the amylase released from the midgut gland. May act as a stress hormone and may be involved in the control of molting and reproduction. This Homarus americanus (American lobster) protein is Crustacean hyperglycemic hormones isoform B.